The sequence spans 147 residues: UPF0460 protein in nifX-nifW intergenic region (147 aa).

Belongs to the UPF0460 family.

The protein is UPF0460 protein in nifX-nifW intergenic region of Frankia alni.